Consider the following 305-residue polypeptide: Protoheme IX farnesyltransferase (305 aa).

A run of 9 helical transmembrane segments spans residues 29–49 (VTQLAVFCAIIGMFLATPGMV), 51–71 (WSVLIGGAAGIWLLAGAAFAI), 101–121 (TLIFSAVLGGAGMWLLHVFAN), 123–143 (LTMWLTFATFLGYAVVYTILL), 151–171 (IVIGGLSGAMPPALGWSAVSG), 177–197 (AWFLVLIIFTWTPPHFWALAL), 221–241 (LLHILLYTLIMIAATLLPFVY), 244–264 (SGYIYLVAALGLGLVFLGYAW), and 283–303 (ILYLSLLFAVLLVDHYFKFVP).

It belongs to the UbiA prenyltransferase family. Protoheme IX farnesyltransferase subfamily.

It is found in the cell inner membrane. The catalysed reaction is heme b + (2E,6E)-farnesyl diphosphate + H2O = Fe(II)-heme o + diphosphate. The protein operates within porphyrin-containing compound metabolism; heme O biosynthesis; heme O from protoheme: step 1/1. Its function is as follows. Converts heme B (protoheme IX) to heme O by substitution of the vinyl group on carbon 2 of heme B porphyrin ring with a hydroxyethyl farnesyl side group. The polypeptide is Protoheme IX farnesyltransferase (Cupriavidus metallidurans (strain ATCC 43123 / DSM 2839 / NBRC 102507 / CH34) (Ralstonia metallidurans)).